Here is a 384-residue protein sequence, read N- to C-terminus: 8-amino-7-oxononanoate synthase (384 aa).

A substrate-binding site is contributed by R21. G108–F109 contributes to the pyridoxal 5'-phosphate binding site. H133 serves as a coordination point for substrate. 3 residues coordinate pyridoxal 5'-phosphate: S179, H207, and T233. K236 carries the post-translational modification N6-(pyridoxal phosphate)lysine. T352 contacts substrate.

It belongs to the class-II pyridoxal-phosphate-dependent aminotransferase family. BioF subfamily. In terms of assembly, homodimer. Requires pyridoxal 5'-phosphate as cofactor.

It catalyses the reaction 6-carboxyhexanoyl-[ACP] + L-alanine + H(+) = (8S)-8-amino-7-oxononanoate + holo-[ACP] + CO2. It functions in the pathway cofactor biosynthesis; biotin biosynthesis. Its function is as follows. Catalyzes the decarboxylative condensation of pimeloyl-[acyl-carrier protein] and L-alanine to produce 8-amino-7-oxononanoate (AON), [acyl-carrier protein], and carbon dioxide. The sequence is that of 8-amino-7-oxononanoate synthase from Shigella flexneri serotype 5b (strain 8401).